The sequence spans 520 residues: GMP synthase [glutamine-hydrolyzing] (520 aa).

Residues 13 to 205 form the Glutamine amidotransferase type-1 domain; it reads KIIVLDYGSQ…ALNICKAKGD (193 aa). Catalysis depends on Cys-90, which acts as the Nucleophile. Residues His-179 and Glu-181 contribute to the active site. Residues 206 to 395 form the GMPS ATP-PPase domain; the sequence is WSMDNFIDMQ…LGMPDHIVWR (190 aa). Residue 233–239 participates in ATP binding; that stretch reads SGGVDSS.

As to quaternary structure, homodimer.

It carries out the reaction XMP + L-glutamine + ATP + H2O = GMP + L-glutamate + AMP + diphosphate + 2 H(+). The protein operates within purine metabolism; GMP biosynthesis; GMP from XMP (L-Gln route): step 1/1. In terms of biological role, catalyzes the synthesis of GMP from XMP. The polypeptide is GMP synthase [glutamine-hydrolyzing] (Streptococcus pneumoniae (strain P1031)).